The sequence spans 167 residues: NAD(P)H-quinone oxidoreductase subunit I, chloroplastic (167 aa).

4Fe-4S ferredoxin-type domains lie at 55 to 84 (GRIH…VDWK) and 95 to 124 (LNYS…MTEE). Residues Cys-64, Cys-67, Cys-70, Cys-74, Cys-104, Cys-107, Cys-110, and Cys-114 each contribute to the [4Fe-4S] cluster site.

The protein belongs to the complex I 23 kDa subunit family. NDH is composed of at least 16 different subunits, 5 of which are encoded in the nucleus. It depends on [4Fe-4S] cluster as a cofactor.

Its subcellular location is the plastid. The protein localises to the chloroplast thylakoid membrane. The enzyme catalyses a plastoquinone + NADH + (n+1) H(+)(in) = a plastoquinol + NAD(+) + n H(+)(out). It carries out the reaction a plastoquinone + NADPH + (n+1) H(+)(in) = a plastoquinol + NADP(+) + n H(+)(out). Its function is as follows. NDH shuttles electrons from NAD(P)H:plastoquinone, via FMN and iron-sulfur (Fe-S) centers, to quinones in the photosynthetic chain and possibly in a chloroplast respiratory chain. The immediate electron acceptor for the enzyme in this species is believed to be plastoquinone. Couples the redox reaction to proton translocation, and thus conserves the redox energy in a proton gradient. This is NAD(P)H-quinone oxidoreductase subunit I, chloroplastic from Morus indica (Mulberry).